The following is a 412-amino-acid chain: MSWDQVWIDINIATMDPSMNEAYGAITDAALAVKDGKIAWLGKRSDLPEFDVLATPVHRGHGGWLTPGLIDAHTHLVFAGNRANEFELRLQGASYEEIARAGGGIVSTVKACRDADEAELFDLARRRLNALAKEGVTTVEIKSGYGLDLDTELKLLRVARELGQHHHVDVVTTFLGAHAVPPEFKTLGEAGTDAYVDLVVNEMLPAVVAENLADAADVFCENIAFNLEQTERVLSAAKTLGLDIKLHAEQLSNLGGSELAARLGAKSVDHIEYLDEAGVKAIAQSGTCAVLLPGAFYFLRETKLPPIDLLRQYQVPMVLASDFNPGSSPICSTLLMLNMGCTLFRLTPEEALAGVTRNAARALGRDQRVGVLREGMEADFCLWRISTPAELAYSYGVNPLVDVVKGGRLIHQ.

Positions 73 and 75 each coordinate Fe(3+). Zn(2+) is bound by residues H73 and H75. 4-imidazolone-5-propanoate contacts are provided by R82, Y145, and H178. Residue Y145 coordinates N-formimidoyl-L-glutamate. H247 provides a ligand contact to Fe(3+). H247 lines the Zn(2+) pocket. Q250 provides a ligand contact to 4-imidazolone-5-propanoate. D322 is a Fe(3+) binding site. Residue D322 coordinates Zn(2+). N-formimidoyl-L-glutamate is bound by residues N324 and G326. S327 contacts 4-imidazolone-5-propanoate.

It belongs to the metallo-dependent hydrolases superfamily. HutI family. Zn(2+) serves as cofactor. The cofactor is Fe(3+).

Its subcellular location is the cytoplasm. It catalyses the reaction 4-imidazolone-5-propanoate + H2O = N-formimidoyl-L-glutamate. The protein operates within amino-acid degradation; L-histidine degradation into L-glutamate; N-formimidoyl-L-glutamate from L-histidine: step 3/3. Its function is as follows. Catalyzes the hydrolytic cleavage of the carbon-nitrogen bond in imidazolone-5-propanoate to yield N-formimidoyl-L-glutamate. It is the third step in the universal histidine degradation pathway. The sequence is that of Imidazolonepropionase from Shewanella amazonensis (strain ATCC BAA-1098 / SB2B).